Reading from the N-terminus, the 506-residue chain is Ubiquitin carboxyl-terminal hydrolase 22 (506 aa).

The UBP-type zinc finger occupies 4-121 (AGCSHVNGFK…KEEQRKAWKL (118 aa)). The Zn(2+) site is built by Cys-6, His-8, Cys-46, Cys-49, Cys-59, Cys-62, Cys-67, His-72, His-76, His-82, Cys-95, and Cys-98. The 343-residue stretch at 159-501 (RGLINLGNTC…EGYLLFYHKQ (343 aa)) folds into the USP domain. The active-site Nucleophile is Cys-168. The active-site Proton acceptor is the His-460.

Belongs to the peptidase C19 family. UBP8 subfamily. In terms of assembly, component of some SAGA transcription coactivator-HAT complexes.

The protein resides in the nucleus. It carries out the reaction Thiol-dependent hydrolysis of ester, thioester, amide, peptide and isopeptide bonds formed by the C-terminal Gly of ubiquitin (a 76-residue protein attached to proteins as an intracellular targeting signal).. In terms of biological role, histone deubiquitinating component of the transcription regulatory histone acetylation (HAT) complex SAGA. Catalyzes the deubiquitination of both histones H2A and H2B, thereby acting as a coactivator. Recruited to specific gene promoters by activators, where it is required for transcription. The chain is Ubiquitin carboxyl-terminal hydrolase 22 (usp22) from Danio rerio (Zebrafish).